A 159-amino-acid chain; its full sequence is Protein Smg homolog (159 aa).

This sequence belongs to the Smg family.

The chain is Protein Smg homolog from Dichelobacter nodosus (strain VCS1703A).